The chain runs to 226 residues: Late protein I226R (226 aa).

Residues 1 to 16 form the signal peptide; it reads MKMETFLVCLFHNADG. N-linked (GlcNAc...) asparagine; by host glycosylation is found at N142 and N164.

The protein belongs to the asfivirus I226R family.

In terms of biological role, plays a role in the inhibition of host NF-kappa-B and IRF3 signaling pathways. Mechanistically, promotes the degradation of host IKBKG through enhancing its ubiquitination leading to inhibition of both pathways. This is Late protein I226R from Ornithodoros (relapsing fever ticks).